We begin with the raw amino-acid sequence, 1469 residues long: WASH complex subunit 2 (1469 aa).

Ser136 carries the phosphoserine modification. 2 disordered regions span residues 178 to 349 (YDSK…RMPV) and 367 to 546 (KVQS…RVAG). A compositionally biased stretch (basic and acidic residues) spans 197-206 (SDEKEPETKK). Ser227 bears the Phosphoserine mark. 2 stretches are compositionally biased toward low complexity: residues 276–293 (SPPSDDPPSTSSSPTSSP) and 306–316 (STASLSSSSSS). Residues 351–372 (LFNEDEFKSFMSEIVDKVQSKT) carry the LFa 1 motif. Over residues 370 to 385 (SKTPSSSVSPATTIST) the composition is skewed to polar residues. A compositionally biased stretch (basic and acidic residues) spans 387-399 (EPPKTKKPVEEYP). Residues Ser422 and Ser426 each carry the phosphoserine modification. Residues 519-528 (FDDDDLDIDD) show a composition bias toward acidic residues. An LFa 5 motif is present at residues 550-563 (LFEDDDQDDVTDLF). Residues 571–591 (IPKETSSGVSPNKNVETPVAS) form a disordered region. The span at 574-585 (ETSSGVSPNKNV) shows a compositional bias: polar residues. Ser580 carries the post-translational modification Phosphoserine. The residue at position 587 (Thr587) is a Phosphothreonine. Residues 595–605 (LFDDIEDEDLF) carry the LFa 6 motif. Disordered regions lie at residues 607–760 (TPKA…TDLF), 933–1254 (ALPN…KLFS), and 1316–1469 (VTTA…LDFK). Composition is skewed to basic and acidic residues over residues 626–649 (GEDKKQSEIAEQKSKNIETGEKQH) and 671–687 (TEQKSDDKEWEAVKDDT). Position 693 is a phosphothreonine (Thr693). Residues 698-709 (LFSEDLTDDELF) carry the LFa 8 motif. Composition is skewed to polar residues over residues 709–728 (FSSTSNNMAEPKSANETNEF), 735–745 (YTSQTEENVSP), and 938–956 (PSATKPSPVTPGDQPSVSS). 3 stretches are compositionally biased toward basic and acidic residues: residues 971–990 (DNDHAGEEVQKEAEPQKDEL), 1031–1042 (ETDRSEVKETPE), and 1077–1089 (RKQESSSSERDEP). Residues 1091–1109 (ATVQTEAEAPSSGQNTVSS) show a composition bias toward polar residues. The span at 1118–1136 (NKSRARGPAKRRPSTRRGR) shows a compositional bias: basic residues. Over residues 1159–1170 (DSPEVEHSERSS) the composition is skewed to basic and acidic residues. Phosphoserine occurs at positions 1241, 1245, 1254, 1344, 1380, 1381, and 1408. Composition is skewed to low complexity over residues 1417-1426 (FGGSSTSKAA) and 1434-1452 (AARTASKPPASKTTTPTAT).

This sequence belongs to the FAM21 family. As to quaternary structure, component of the WASH complex.

In terms of biological role, acts at least in part as component of the WASH complex which may regulate wash nucleation-promoting factor (NPF) activity and is required for its membrane targeting during endosomal sorting. The sequence is that of WASH complex subunit 2 from Drosophila melanogaster (Fruit fly).